Here is a 326-residue protein sequence, read N- to C-terminus: Light-induced protein, chloroplastic (326 aa).

The transit peptide at 1–63 directs the protein to the chloroplast; that stretch reads MASISSLNQI…TNPKPKFTAQ (63 aa).

The protein belongs to the LIPC family. Associates with the major light-harvesting antenna complex polypeptides of the PSII oxygen-evolving complex. In terms of tissue distribution, expressed in leaves.

The protein localises to the plastid. The protein resides in the chloroplast thylakoid membrane. Required for normal plant growth. May be both photoprotective and play an ancillary role in photosynthesis. May structurally stabilize thylakoids during osmotic and oxidative stress. In Solanum tuberosum (Potato), this protein is Light-induced protein, chloroplastic.